Consider the following 57-residue polypeptide: UPF0391 membrane protein Xaut_1725 (57 aa).

Transmembrane regions (helical) follow at residues 4–24 (WAVTFLVVALIAAVLGFGGIA) and 30–50 (IAKIIFFVAIVLFVISAVAGL).

This sequence belongs to the UPF0391 family.

It is found in the cell membrane. The polypeptide is UPF0391 membrane protein Xaut_1725 (Xanthobacter autotrophicus (strain ATCC BAA-1158 / Py2)).